A 369-amino-acid chain; its full sequence is Short chain dehydrogenase rstn4 (369 aa).

NADP(+) is bound by residues Lys-88, Asp-111, Asn-138, Tyr-234, and Lys-238. The Proton donor role is filled by Tyr-234. The active-site Lowers pKa of active site Tyr is the Lys-238.

It belongs to the short-chain dehydrogenases/reductases (SDR) family.

It functions in the pathway antifungal biosynthesis. In terms of biological role, short chain dehydrogenase; part of the gene cluster that mediates the biosynthesis of the tetrahydropyranyl antifungal agent restricticin that acts as an inhibitor of CYP51 and blocks the ergosterol biosynthesis. The highly reducing polyketide synthase rstn3, the short chain dehydrogenase rstn4, the cyclase rstn5, the FAD-dependent monooxygenase rstn6 and the enoylreductase rstn7 are required to generate the first stable intermediate desmethylrestrictinol. Rstn3 with rstn7 biosynthesize the first polyketide chain intermediate that is reduced by rstn4, followed by epoxidation by rstn6 before 6-endo cyclization via epoxide opening by rstn5 leads to desmethylrestrictinol. The methyltransferase rstn1 then catalyzes the C4 O-methylation of desmethylrestrictinol to produce restrictinol, and the nonribosomal peptide synthetase rstn8 catalyzes the C3 esterification of restrictinol with glycine that leads to restricticin. This is Short chain dehydrogenase rstn4 from Aspergillus nomiae NRRL (strain ATCC 15546 / NRRL 13137 / CBS 260.88 / M93).